The chain runs to 319 residues: MAMDSQPFRGHIPNGVPPNRTYQEVYAENGRWYGTFKKGKYMFPIDESSWSRAEMRVIVLPSTTRKLLVYWTWVAGQVSGASTWPIIGPRVYAEIYRHLKPYYGYFEQVEIDWSPRSDDGSLRRDGYVVQWANELMDAMDSFGRPIRLDSNLTKQRLADVGFDEIKEEVIQLPLNGWPTEVHNRELGRWFNLGVRQAFQPLSLAPLCRGHGRTPAQVDELAEKARGEVYSNSVRAYCTFPSFAEPAGYAQVTPKSTIPAPFQRAWVGSREPQSGTCSVQRENGANGDRSTLSATGTFHVIRRIRAAQTPAAVGKRQDAG.

A disordered region spans residues 269–293 (REPQSGTCSVQRENGANGDRSTLSA). Residues 270 to 293 (EPQSGTCSVQRENGANGDRSTLSA) show a composition bias toward polar residues.

Belongs to the methyltransferase superfamily. LaeA methyltransferase family. In terms of assembly, component of the heterotrimeric velvet complex composed of laeA, veA and velB; VeA acting as a bridging protein between laeA and velB.

The protein resides in the nucleus. It catalyses the reaction L-methionyl-[protein] + S-adenosyl-L-methionine = S-methyl-L-methionyl-[protein] + S-adenosyl-L-homocysteine. In terms of biological role, methyltransferase; component of the velvet transcription factor complex that acts as a global regulator for secondary metabolite gene expression. Controls the expression of the chaetoglobosin A biosynthesis cluster via the cheR transcription factor and the subsequent production of chaetoglobosin A. Positively regulates the expression of smtA and negatively regulates the expression of velB. LaeA also regulates pigmentation and spores production. This chain is Protein-methionine methyltransferase laeA, found in Chaetomium globosum (strain ATCC 6205 / CBS 148.51 / DSM 1962 / NBRC 6347 / NRRL 1970) (Soil fungus).